The sequence spans 44 residues: Photosystem I reaction center subunit IX (44 aa).

Residues Y7–I27 traverse the membrane as a helical segment.

The protein belongs to the PsaJ family.

The protein localises to the plastid. Its subcellular location is the chloroplast thylakoid membrane. Its function is as follows. May help in the organization of the PsaE and PsaF subunits. The protein is Photosystem I reaction center subunit IX of Nymphaea alba (White water-lily).